The primary structure comprises 157 residues: MTQLTCFKAYDIRGELGEELNEDIAYRIGRAYGEFLKPGKIVVGGDVRLTSESLNVALARGLMDAGTDVLDIGLSGTEEIYFATFHLGVDGGIEVTASHNPMNYNGMKLVRENAKPISGDTGLRDIQRLAEENQFPPVDPARRGTLRQISVLKEYVD.

Residue serine 98 is the Phosphoserine intermediate of the active site. Residue serine 98 participates in Mg(2+) binding.

The protein belongs to the phosphohexose mutase family. Mg(2+) serves as cofactor.

It carries out the reaction alpha-D-mannose 1-phosphate = D-mannose 6-phosphate. It participates in nucleotide-sugar biosynthesis; GDP-alpha-D-mannose biosynthesis; alpha-D-mannose 1-phosphate from D-fructose 6-phosphate: step 2/2. It functions in the pathway capsule biogenesis; capsule polysaccharide biosynthesis. Involved in the biosynthesis of the K2 capsular polysaccharide biosynthesis. This chain is Phosphomannomutase (manB), found in Klebsiella pneumoniae.